Here is a 246-residue protein sequence, read N- to C-terminus: ATP synthase subunit a (246 aa).

Positions 1–3 are cleaved as a propeptide — removed in mature form; sequence MFY. 7 consecutive transmembrane segments (helical) span residues 20–40, 56–76, 82–102, 112–132, 138–158, 176–196, and 203–223; these read ILTL…SIIF, WGVA…SQIG, FFPL…ISMI, LVAI…LGLY, FFAL…LVLI, ANIL…VNLM, and FIGG…EVGI.

Belongs to the ATPase A chain family. As to quaternary structure, F-type ATPases have 2 components, CF(1) - the catalytic core - and CF(0) - the membrane proton channel. CF(1) has five subunits: alpha(3), beta(3), gamma(1), delta(1), epsilon(1). CF(0) has three main subunits: a, b and c.

It is found in the mitochondrion inner membrane. In terms of biological role, mitochondrial membrane ATP synthase (F(1)F(0) ATP synthase or Complex V) produces ATP from ADP in the presence of a proton gradient across the membrane which is generated by electron transport complexes of the respiratory chain. F-type ATPases consist of two structural domains, F(1) - containing the extramembraneous catalytic core and F(0) - containing the membrane proton channel, linked together by a central stalk and a peripheral stalk. During catalysis, ATP synthesis in the catalytic domain of F(1) is coupled via a rotary mechanism of the central stalk subunits to proton translocation. Key component of the proton channel; it may play a direct role in the translocation of protons across the membrane. This is ATP synthase subunit a (ATP6) from Candida albicans (strain SC5314 / ATCC MYA-2876) (Yeast).